Consider the following 357-residue polypeptide: Uroporphyrinogen decarboxylase (357 aa).

Substrate contacts are provided by residues 34–38 (RQAGR), Asp-83, Tyr-158, Ser-213, and His-336.

It belongs to the uroporphyrinogen decarboxylase family. Homodimer.

It is found in the cytoplasm. It carries out the reaction uroporphyrinogen III + 4 H(+) = coproporphyrinogen III + 4 CO2. It participates in porphyrin-containing compound metabolism; protoporphyrin-IX biosynthesis; coproporphyrinogen-III from 5-aminolevulinate: step 4/4. In terms of biological role, catalyzes the decarboxylation of four acetate groups of uroporphyrinogen-III to yield coproporphyrinogen-III. The polypeptide is Uroporphyrinogen decarboxylase (Mycolicibacterium paratuberculosis (strain ATCC BAA-968 / K-10) (Mycobacterium paratuberculosis)).